The primary structure comprises 237 residues: Orotidine 5'-phosphate decarboxylase (237 aa).

Substrate is bound by residues Asp-11, Lys-34, 61–70, Thr-124, Arg-186, Gln-195, Gly-215, and Arg-216; that span reads DLKLHDIPNT. Catalysis depends on Lys-63, which acts as the Proton donor.

The protein belongs to the OMP decarboxylase family. Type 1 subfamily. In terms of assembly, homodimer.

It carries out the reaction orotidine 5'-phosphate + H(+) = UMP + CO2. The protein operates within pyrimidine metabolism; UMP biosynthesis via de novo pathway; UMP from orotate: step 2/2. Functionally, catalyzes the decarboxylation of orotidine 5'-monophosphate (OMP) to uridine 5'-monophosphate (UMP). This is Orotidine 5'-phosphate decarboxylase from Lactococcus lactis subsp. lactis (strain IL1403) (Streptococcus lactis).